Consider the following 1061-residue polypeptide: Carbamoyl phosphate synthase large chain (1061 aa).

Residues 1–401 (MPKRTDVHKI…ALQKAVRSLE (401 aa)) are carboxyphosphate synthetic domain. 12 residues coordinate ATP: R129, R169, G175, G176, K208, I210, E215, G241, I242, H243, Q284, and E298. One can recognise an ATP-grasp 1 domain in the interval 133–327 (KDLMQELNEP…IAKLAAKIAV (195 aa)). Mg(2+) is bound by residues Q284, E298, and N300. 3 residues coordinate Mn(2+): Q284, E298, and N300. An oligomerization domain region spans residues 402–546 (IDEKDLISAK…YSSYDLENES (145 aa)). The segment at 547 to 929 (KKSDKKSVLV…ALYKAFTGAK (383 aa)) is carbamoyl phosphate synthetic domain. The region spanning 671 to 861 (DQTIKNLGLK…MAQVATRVIL (191 aa)) is the ATP-grasp 2 domain. 10 residues coordinate ATP: R707, A746, L748, E752, G777, V778, H779, S780, Q820, and E832. Residues Q820, E832, and N834 each contribute to the Mg(2+) site. Mn(2+) is bound by residues Q820, E832, and N834. The 132-residue stretch at 930 to 1061 (MELPDNGNVL…ENRSFATNSL (132 aa)) folds into the MGS-like domain. The interval 930–1061 (MELPDNGNVL…ENRSFATNSL (132 aa)) is allosteric domain.

It belongs to the CarB family. As to quaternary structure, composed of two chains; the small (or glutamine) chain promotes the hydrolysis of glutamine to ammonia, which is used by the large (or ammonia) chain to synthesize carbamoyl phosphate. Tetramer of heterodimers (alpha,beta)4. Mg(2+) serves as cofactor. It depends on Mn(2+) as a cofactor.

It catalyses the reaction hydrogencarbonate + L-glutamine + 2 ATP + H2O = carbamoyl phosphate + L-glutamate + 2 ADP + phosphate + 2 H(+). The catalysed reaction is hydrogencarbonate + NH4(+) + 2 ATP = carbamoyl phosphate + 2 ADP + phosphate + 2 H(+). It functions in the pathway amino-acid biosynthesis; L-arginine biosynthesis; carbamoyl phosphate from bicarbonate: step 1/1. It participates in pyrimidine metabolism; UMP biosynthesis via de novo pathway; (S)-dihydroorotate from bicarbonate: step 1/3. Functionally, large subunit of the glutamine-dependent carbamoyl phosphate synthetase (CPSase). CPSase catalyzes the formation of carbamoyl phosphate from the ammonia moiety of glutamine, carbonate, and phosphate donated by ATP, constituting the first step of 2 biosynthetic pathways, one leading to arginine and/or urea and the other to pyrimidine nucleotides. The large subunit (synthetase) binds the substrates ammonia (free or transferred from glutamine from the small subunit), hydrogencarbonate and ATP and carries out an ATP-coupled ligase reaction, activating hydrogencarbonate by forming carboxy phosphate which reacts with ammonia to form carbamoyl phosphate. This chain is Carbamoyl phosphate synthase large chain, found in Ligilactobacillus salivarius (strain UCC118) (Lactobacillus salivarius).